The sequence spans 462 residues: Chromosomal replication initiator protein DnaA (462 aa).

The interval 1–84 (MAVSLWQQCI…RFDIGSRPSA (84 aa)) is domain I, interacts with DnaA modulators. Positions 84 to 125 (APKPIQATAAVVKPKLESSPQKSQTSFNVNAPEPAATANHRS) are domain II. The domain III, AAA+ region stretch occupies residues 126 to 342 (NINPTYQFEN…GALNRVIANA (217 aa)). Gly-170, Gly-172, Lys-173, and Thr-174 together coordinate ATP. The tract at residues 343-462 (NFTGRPITID…YANLIRTLSS (120 aa)) is domain IV, binds dsDNA.

This sequence belongs to the DnaA family. Oligomerizes as a right-handed, spiral filament on DNA at oriC.

It localises to the cytoplasm. In terms of biological role, plays an essential role in the initiation and regulation of chromosomal replication. ATP-DnaA binds to the origin of replication (oriC) to initiate formation of the DNA replication initiation complex once per cell cycle. Binds the DnaA box (a 9 base pair repeat at the origin) and separates the double-stranded (ds)DNA. Forms a right-handed helical filament on oriC DNA; dsDNA binds to the exterior of the filament while single-stranded (ss)DNA is stabiized in the filament's interior. The ATP-DnaA-oriC complex binds and stabilizes one strand of the AT-rich DNA unwinding element (DUE), permitting loading of DNA polymerase. After initiation quickly degrades to an ADP-DnaA complex that is not apt for DNA replication. Binds acidic phospholipids. This chain is Chromosomal replication initiator protein DnaA, found in Shewanella woodyi (strain ATCC 51908 / MS32).